Reading from the N-terminus, the 297-residue chain is Lipoyl synthase (297 aa).

[4Fe-4S] cluster-binding residues include C37, C42, C48, C63, C67, C70, and S276. A Radical SAM core domain is found at 49 to 265 (WSRKHATVMI…ERIAKTKGFL (217 aa)).

This sequence belongs to the radical SAM superfamily. Lipoyl synthase family. Requires [4Fe-4S] cluster as cofactor.

Its subcellular location is the cytoplasm. It catalyses the reaction [[Fe-S] cluster scaffold protein carrying a second [4Fe-4S](2+) cluster] + N(6)-octanoyl-L-lysyl-[protein] + 2 oxidized [2Fe-2S]-[ferredoxin] + 2 S-adenosyl-L-methionine + 4 H(+) = [[Fe-S] cluster scaffold protein] + N(6)-[(R)-dihydrolipoyl]-L-lysyl-[protein] + 4 Fe(3+) + 2 hydrogen sulfide + 2 5'-deoxyadenosine + 2 L-methionine + 2 reduced [2Fe-2S]-[ferredoxin]. Its pathway is protein modification; protein lipoylation via endogenous pathway; protein N(6)-(lipoyl)lysine from octanoyl-[acyl-carrier-protein]: step 2/2. Its function is as follows. Catalyzes the radical-mediated insertion of two sulfur atoms into the C-6 and C-8 positions of the octanoyl moiety bound to the lipoyl domains of lipoate-dependent enzymes, thereby converting the octanoylated domains into lipoylated derivatives. The protein is Lipoyl synthase of Rickettsia prowazekii (strain Madrid E).